Consider the following 361-residue polypeptide: Membrane-bound lytic murein transglycosylase B (361 aa).

The N-terminal stretch at 1–18 (MFKRRYVTLLPLFVLLAA) is a signal peptide. Cys-19 carries the N-palmitoyl cysteine lipid modification. The S-diacylglycerol cysteine moiety is linked to residue Cys-19. Glu-162 is an active-site residue.

As to quaternary structure, monomer.

Its subcellular location is the cell outer membrane. The catalysed reaction is Exolytic cleavage of the (1-&gt;4)-beta-glycosidic linkage between N-acetylmuramic acid (MurNAc) and N-acetylglucosamine (GlcNAc) residues in peptidoglycan, from either the reducing or the non-reducing ends of the peptidoglycan chains, with concomitant formation of a 1,6-anhydrobond in the MurNAc residue.. Functionally, murein-degrading enzyme. Catalyzes the cleavage of the glycosidic bonds between N-acetylmuramic acid and N-acetylglucosamine residues in peptidoglycan. May play a role in recycling of muropeptides during cell elongation and/or cell division. This chain is Membrane-bound lytic murein transglycosylase B (mltB), found in Escherichia coli (strain K12).